Here is a 321-residue protein sequence, read N- to C-terminus: MSDKKHVVVLMGGWSSEREISLLSGRHVGKALEEAGYRVTLLDMDRDIAFKLREAKPDVVFNALHGTPGEDGSIQGLMDLMAIRYTHSGLTASAIAIDKELTKKILTPENIPMPQGCLVERESLYTKDPLPRPYVLKPVNEGSSVGVAIIDESFNDGQPIRKDQIDPWKNFKTLLAEPFIKGRELTVAVMGDKALAVTELCPNNGFYDYKAKYTDGMTTHICPAKIPAEIAEKAMALSLKAHQLLGCRGPSRSDFRWDDEAGLDGLFLLEVNTQPGMTPLSLVPEQAKQLGIDYVALCRMIVEEALAEDTLQETKMAGQGG.

In terms of domain architecture, ATP-grasp spans 103–303 (KKILTPENIP…YVALCRMIVE (201 aa)). 129–186 (PLPRPYVLKPVNEGSSVGVAIIDESFNDGQPIRKDQIDPWKNFKTLLAEPFIKGRELT) lines the ATP pocket. Residues D254, E270, and N272 each coordinate Mg(2+).

It belongs to the D-alanine--D-alanine ligase family. It depends on Mg(2+) as a cofactor. Mn(2+) serves as cofactor.

It localises to the cytoplasm. The enzyme catalyses 2 D-alanine + ATP = D-alanyl-D-alanine + ADP + phosphate + H(+). Its pathway is cell wall biogenesis; peptidoglycan biosynthesis. Functionally, cell wall formation. The polypeptide is D-alanine--D-alanine ligase (Zymomonas mobilis subsp. mobilis (strain ATCC 31821 / ZM4 / CP4)).